We begin with the raw amino-acid sequence, 142 residues long: Large ribosomal subunit protein uL11 (142 aa).

It belongs to the universal ribosomal protein uL11 family. In terms of assembly, part of the ribosomal stalk of the 50S ribosomal subunit. Interacts with L10 and the large rRNA to form the base of the stalk. L10 forms an elongated spine to which L12 dimers bind in a sequential fashion forming a multimeric L10(L12)X complex. One or more lysine residues are methylated.

Functionally, forms part of the ribosomal stalk which helps the ribosome interact with GTP-bound translation factors. The sequence is that of Large ribosomal subunit protein uL11 from Thermobifida fusca (strain YX).